A 41-amino-acid polypeptide reads, in one-letter code: Large ribosomal subunit protein bL36 (41 aa).

The protein belongs to the bacterial ribosomal protein bL36 family.

The polypeptide is Large ribosomal subunit protein bL36 (rpmJ) (Agrobacterium fabrum (strain C58 / ATCC 33970) (Agrobacterium tumefaciens (strain C58))).